The sequence spans 115 residues: Protein translation factor SUI1 homolog (115 aa).

Belongs to the SUI1 family. In terms of tissue distribution, expressed in all tissues examined.

Its function is as follows. Probably involved in translation. The sequence is that of Protein translation factor SUI1 homolog (GOS2) from Oryza sativa subsp. indica (Rice).